The primary structure comprises 130 residues: Holo-[acyl-carrier-protein] synthase (130 aa).

The Mg(2+) site is built by aspartate 9 and glutamate 58.

It belongs to the P-Pant transferase superfamily. AcpS family. Requires Mg(2+) as cofactor.

The protein resides in the cytoplasm. It carries out the reaction apo-[ACP] + CoA = holo-[ACP] + adenosine 3',5'-bisphosphate + H(+). Transfers the 4'-phosphopantetheine moiety from coenzyme A to a Ser of acyl-carrier-protein. The sequence is that of Holo-[acyl-carrier-protein] synthase from Mycolicibacterium smegmatis (strain ATCC 700084 / mc(2)155) (Mycobacterium smegmatis).